The sequence spans 457 residues: Methylphosphonate synthase (457 aa).

Positions 23 to 74 constitute an HTH cro/C1-type 1 domain; the sequence is ILNDIKRRPEDAANELGVSIEEINSIISGKQKISPSLIEKAVNIWPVNERDF. The H-T-H motif DNA-binding region spans 32–50; that stretch reads EDAANELGVSIEEINSIIS. His148 and His190 together coordinate Fe cation. One can recognise an HTH cro/C1-type 2 domain in the interval 247-301; that stretch reads LEYYFELSNLTKEKFAKRTNFSMETLADFFTKKKLPTFDELKIIAKALNVNSRDL. The H-T-H motif DNA-binding region spans 258–277; that stretch reads KEKFAKRTNFSMETLADFFT.

Belongs to the non-heme iron-dependent dioxygenase family. Fe(2+) is required as a cofactor.

The catalysed reaction is 2-hydroxyethylphosphonate + O2 = methylphosphonate + hydrogencarbonate + H(+). The protein operates within phosphorus metabolism; phosphonate biosynthesis. In terms of biological role, catalyzes the conversion of 2-hydroxyethylphosphonate into methylphosphonate in the methylphosphonate biosynthesis pathway. The sequence is that of Methylphosphonate synthase (mpnS) from Nitrosopumilus maritimus (strain SCM1).